A 178-amino-acid polypeptide reads, in one-letter code: Inorganic pyrophosphatase (178 aa).

Substrate is bound by residues Lys29, Arg43, and Tyr55. Residues Asp65, Asp70, and Asp102 each contribute to the Mg(2+) site. Substrate is bound at residue Tyr141.

The protein belongs to the PPase family. As to quaternary structure, homohexamer. Mg(2+) is required as a cofactor.

It is found in the cytoplasm. It catalyses the reaction diphosphate + H2O = 2 phosphate + H(+). Catalyzes the hydrolysis of inorganic pyrophosphate (PPi) forming two phosphate ions. The protein is Inorganic pyrophosphatase of Rickettsia typhi (strain ATCC VR-144 / Wilmington).